The following is an 84-amino-acid chain: uncharacterized protein (84 aa).

A run of 3 helical transmembrane segments spans residues 4 to 20 (AYVLVSGFMLVLGIKYG), 27 to 49 (VWKAGLIILAGFAVIFAAAWIAF), and 59 to 81 (IGLAKSLSVVMGLIAGVLSVYVL).

Its subcellular location is the cell membrane. This is an uncharacterized protein from Archaeoglobus fulgidus (strain ATCC 49558 / DSM 4304 / JCM 9628 / NBRC 100126 / VC-16).